Consider the following 359-residue polypeptide: Protein FLX-like 2 (359 aa).

The segment covering 1-16 (MESKGRIHPSHHHMRR) has biased composition (basic residues). The segment at 1-27 (MESKGRIHPSHHHMRRPLPGPGGCIAH) is disordered. Residues 83-236 (HGSLRQELAA…EKLQAQLMNN (154 aa)) are a coiled coil. The segment at 303-359 (TQPGYFPQRPGYNFPRGPPGSYDPTTRLPTGPYGAPFPPGPSNNTPYAGTHGNPSRR) is disordered.

This sequence belongs to the FLX family. As to quaternary structure, interacts with FRI.

Functionally, has no transcriptional activation activity. The sequence is that of Protein FLX-like 2 (FLXL2) from Arabidopsis thaliana (Mouse-ear cress).